A 513-amino-acid chain; its full sequence is Microtubule-associated protein 70-5 (513 aa).

4 disordered regions span residues 1-20, 60-81, 347-367, and 393-413; these read MTAA…SQLK, KLGA…LEEE, FLTS…GSVT, and ANGL…EDGN. The span at 9–18 shows a compositional bias: polar residues; the sequence is VSDTSSLQSQ. The stretch at 10–322 forms a coiled coil; sequence SDTSSLQSQL…LKLRLKTIED (313 aa). Over residues 60–80 the composition is skewed to basic and acidic residues; it reads KLGATENQVDQKELERKKLEE. Positions 190–400 are required for targeting to microtubules; it reads FLEKINRQKV…ITANGLTDQH (211 aa). Residues 426–501 adopt a coiled-coil conformation; it reads DRLQKEVIAL…EESKLCRKAK (76 aa).

Belongs to the MAP70 family. As to quaternary structure, interacts with MAP70.1 and itself.

The protein resides in the cytoplasm. It localises to the cytoskeleton. Plant-specific protein that interact with microtubules and regulates microtubule dynamics. May play a role in anisotropic cell expansion and organ growth. In association with MAP70.1, is essential for the normal banding pattern of secondary cell wall and for the proper development of xylem tracheary elements and wood formation. The polypeptide is Microtubule-associated protein 70-5 (MAP70.5) (Arabidopsis thaliana (Mouse-ear cress)).